Consider the following 659-residue polypeptide: RNA-binding E3 ubiquitin-protein ligase MEX3C (659 aa).

Over residues 1 to 15 (MPSGSSAALALAAAP) the composition is skewed to low complexity. Residues 1–140 (MPSGSSAALA…EEAEEEDRSS (140 aa)) are disordered. Pro residues predominate over residues 16 to 37 (APLPQPPPPPPPPPPPLPPPSG). Positions 64-82 (EPGAPALRAPAAAAQGQAR) are enriched in low complexity. The segment covering 83 to 94 (RAAELSPEERAP) has biased composition (basic and acidic residues). Residue S88 is modified to Phosphoserine. Residues 104 to 137 (AELELEEDEEEGEEAELDGDLLEEEELEEAEEED) are compositionally biased toward acidic residues. KH domains follow at residues 232 to 293 (TTEC…KREI) and 326 to 387 (QTTV…REEI). The segment at 513–569 (FEPVNPLSGFGSDPSGNMKTQRRGSQPSTPRLSPTFPESIEHPLARRVRSDPPSTGN) is disordered. The segment covering 526-544 (PSGNMKTQRRGSQPSTPRL) has biased composition (polar residues). S537 and S545 each carry phosphoserine. Residues 551-562 (SIEHPLARRVRS) show a composition bias toward basic and acidic residues. The segment at 608 to 648 (CVICFENEVIAALVPCGHNLFCMECANKICEKRTPSCPVCQ) adopts an RING-type zinc-finger fold.

As to quaternary structure, interacts with USP7, which antagonizes the ability to degrade mRNA. As to expression, highest levels found in fetal brain and testis. Also expressed in thymus, salivary gland and uterus. Highly expressed in cells of the innate immune system, in particular activated NK cells. Week expression in the intestine.

The protein localises to the cytoplasm. It localises to the nucleus. The enzyme catalyses S-ubiquitinyl-[E2 ubiquitin-conjugating enzyme]-L-cysteine + [acceptor protein]-L-lysine = [E2 ubiquitin-conjugating enzyme]-L-cysteine + N(6)-ubiquitinyl-[acceptor protein]-L-lysine.. E3 ubiquitin ligase responsible for the post-transcriptional regulation of common HLA-A allotypes. Binds to the 3' UTR of HLA-A2 mRNA, and regulates its levels by promoting mRNA decay. RNA binding is sufficient to prevent translation, but ubiquitin ligase activity is required for mRNA degradation. This Homo sapiens (Human) protein is RNA-binding E3 ubiquitin-protein ligase MEX3C (MEX3C).